The chain runs to 118 residues: Holo-[acyl-carrier-protein] synthase (118 aa).

Residues aspartate 8 and glutamate 50 each coordinate Mg(2+).

The protein belongs to the P-Pant transferase superfamily. AcpS family. Mg(2+) serves as cofactor.

It is found in the cytoplasm. It carries out the reaction apo-[ACP] + CoA = holo-[ACP] + adenosine 3',5'-bisphosphate + H(+). Its function is as follows. Transfers the 4'-phosphopantetheine moiety from coenzyme A to a Ser of acyl-carrier-protein. The polypeptide is Holo-[acyl-carrier-protein] synthase (Leifsonia xyli subsp. xyli (strain CTCB07)).